The following is a 240-amino-acid chain: 1-(5-phosphoribosyl)-5-[(5-phosphoribosylamino)methylideneamino] imidazole-4-carboxamide isomerase (240 aa).

The active-site Proton acceptor is the D8. The Proton donor role is filled by D129.

Belongs to the HisA/HisF family.

The protein resides in the cytoplasm. It catalyses the reaction 1-(5-phospho-beta-D-ribosyl)-5-[(5-phospho-beta-D-ribosylamino)methylideneamino]imidazole-4-carboxamide = 5-[(5-phospho-1-deoxy-D-ribulos-1-ylimino)methylamino]-1-(5-phospho-beta-D-ribosyl)imidazole-4-carboxamide. Its pathway is amino-acid biosynthesis; L-histidine biosynthesis; L-histidine from 5-phospho-alpha-D-ribose 1-diphosphate: step 4/9. In Dinoroseobacter shibae (strain DSM 16493 / NCIMB 14021 / DFL 12), this protein is 1-(5-phosphoribosyl)-5-[(5-phosphoribosylamino)methylideneamino] imidazole-4-carboxamide isomerase.